Here is a 314-residue protein sequence, read N- to C-terminus: Protein phosphatase PTC7 homolog fig (314 aa).

The region spanning 43-309 (PYLVTVVQGR…DDITLILSSV (267 aa)) is the PPM-type phosphatase domain. Mn(2+) contacts are provided by aspartate 87, glycine 88, and aspartate 232.

This sequence belongs to the PP2C family. It depends on Mg(2+) as a cofactor. Mn(2+) serves as cofactor.

The enzyme catalyses O-phospho-L-seryl-[protein] + H2O = L-seryl-[protein] + phosphate. It catalyses the reaction O-phospho-L-threonyl-[protein] + H2O = L-threonyl-[protein] + phosphate. In Drosophila sechellia (Fruit fly), this protein is Protein phosphatase PTC7 homolog fig.